A 295-amino-acid chain; its full sequence is Bifunctional protein FolD (295 aa).

Residues 166-168 (GRS), Ser195, and Ile236 each bind NADP(+).

This sequence belongs to the tetrahydrofolate dehydrogenase/cyclohydrolase family. As to quaternary structure, homodimer.

The enzyme catalyses (6R)-5,10-methylene-5,6,7,8-tetrahydrofolate + NADP(+) = (6R)-5,10-methenyltetrahydrofolate + NADPH. It carries out the reaction (6R)-5,10-methenyltetrahydrofolate + H2O = (6R)-10-formyltetrahydrofolate + H(+). Its pathway is one-carbon metabolism; tetrahydrofolate interconversion. In terms of biological role, catalyzes the oxidation of 5,10-methylenetetrahydrofolate to 5,10-methenyltetrahydrofolate and then the hydrolysis of 5,10-methenyltetrahydrofolate to 10-formyltetrahydrofolate. The polypeptide is Bifunctional protein FolD (Chlorobium phaeovibrioides (strain DSM 265 / 1930) (Prosthecochloris vibrioformis (strain DSM 265))).